A 159-amino-acid polypeptide reads, in one-letter code: Transcription elongation factor A protein-like 1 (159 aa).

The segment at 1–121 (MDKPRKENEE…QFKGDIHGRN (121 aa)) is disordered. The span at 17 to 34 (KTDEERPPVEHSPEKQSP) shows a compositional bias: basic and acidic residues. Over residues 37-54 (QSSEEQSSEEEFFPEELL) the composition is skewed to acidic residues. 2 stretches are compositionally biased toward basic and acidic residues: residues 64-80 (SEER…DLFE) and 95-119 (HKLE…DIHG).

Belongs to the TFS-II family. TFA subfamily.

It localises to the nucleus. Its function is as follows. May be involved in transcriptional regulation. Modulates various viral and cellular promoters in a promoter context-dependent manner. Does not bind DNA directly. This Gorilla gorilla gorilla (Western lowland gorilla) protein is Transcription elongation factor A protein-like 1.